The following is a 183-amino-acid chain: ATP synthase subunit b, chloroplastic (183 aa).

A helical membrane pass occupies residues 27–49; the sequence is LATNLINLTVVVGVLIFFGKGVL.

It belongs to the ATPase B chain family. In terms of assembly, F-type ATPases have 2 components, F(1) - the catalytic core - and F(0) - the membrane proton channel. F(1) has five subunits: alpha(3), beta(3), gamma(1), delta(1), epsilon(1). F(0) has four main subunits: a(1), b(1), b'(1) and c(10-14). The alpha and beta chains form an alternating ring which encloses part of the gamma chain. F(1) is attached to F(0) by a central stalk formed by the gamma and epsilon chains, while a peripheral stalk is formed by the delta, b and b' chains.

The protein resides in the plastid. The protein localises to the chloroplast thylakoid membrane. F(1)F(0) ATP synthase produces ATP from ADP in the presence of a proton or sodium gradient. F-type ATPases consist of two structural domains, F(1) containing the extramembraneous catalytic core and F(0) containing the membrane proton channel, linked together by a central stalk and a peripheral stalk. During catalysis, ATP synthesis in the catalytic domain of F(1) is coupled via a rotary mechanism of the central stalk subunits to proton translocation. In terms of biological role, component of the F(0) channel, it forms part of the peripheral stalk, linking F(1) to F(0). The chain is ATP synthase subunit b, chloroplastic from Lolium perenne (Perennial ryegrass).